The primary structure comprises 87 residues: UPF0367 protein P9211_01391 (87 aa).

The protein belongs to the UPF0367 family.

The sequence is that of UPF0367 protein P9211_01391 from Prochlorococcus marinus (strain MIT 9211).